Here is a 159-residue protein sequence, read N- to C-terminus: Small ribosomal subunit protein uS4 (159 aa).

An S4 RNA-binding domain is found at arginine 106–valine 158.

The protein belongs to the universal ribosomal protein uS4 family. In terms of assembly, part of the 30S ribosomal subunit. Contacts protein S5. The interaction surface between S4 and S5 is involved in control of translational fidelity.

One of the primary rRNA binding proteins, it binds directly to 16S rRNA where it nucleates assembly of the body of the 30S subunit. In terms of biological role, with S5 and S12 plays an important role in translational accuracy. The polypeptide is Small ribosomal subunit protein uS4 (Pyrobaculum arsenaticum (strain DSM 13514 / JCM 11321 / PZ6)).